Here is a 446-residue protein sequence, read N- to C-terminus: ATP-dependent protease ATPase subunit HslU (446 aa).

ATP is bound by residues V18, 60-65, D259, E324, and R396; that span reads GVGKTE.

It belongs to the ClpX chaperone family. HslU subfamily. A double ring-shaped homohexamer of HslV is capped on each side by a ring-shaped HslU homohexamer. The assembly of the HslU/HslV complex is dependent on binding of ATP.

It localises to the cytoplasm. In terms of biological role, ATPase subunit of a proteasome-like degradation complex; this subunit has chaperone activity. The binding of ATP and its subsequent hydrolysis by HslU are essential for unfolding of protein substrates subsequently hydrolyzed by HslV. HslU recognizes the N-terminal part of its protein substrates and unfolds these before they are guided to HslV for hydrolysis. The polypeptide is ATP-dependent protease ATPase subunit HslU (Acidovorax ebreus (strain TPSY) (Diaphorobacter sp. (strain TPSY))).